Here is a 136-residue protein sequence, read N- to C-terminus: Large ribosomal subunit protein eL27 (136 aa).

A KOW domain is found at 5-40 (MKPGKVVLVLAGRYSGRKAVIVKNIDDGTSDRPYSH). N6-acetyllysine is present on residues lysine 27 and lysine 93.

Belongs to the eukaryotic ribosomal protein eL27 family. As to quaternary structure, component of the large ribosomal subunit. Interacts with RRP1B. Component of the large ribosomal subunit. Interacts with RRP1B. Interacts with DHX33.

It localises to the cytoplasm. The protein resides in the cytosol. Its subcellular location is the rough endoplasmic reticulum. Functionally, component of the large ribosomal subunit. Required for proper rRNA processing and maturation of 28S and 5.8S rRNAs. This is Large ribosomal subunit protein eL27 (RPL27) from Canis lupus familiaris (Dog).